The chain runs to 359 residues: MSQPNSILMSYGWDPSIYLEEPKLLEGLKPGRVLAVYGEYSKIIIEQGEKKGIFSGALMASGESIVTGDWVLIREIEGDELCIVEKILPRKTFLRRSNPGKRKGSQAIASNIDLLLVIMGLDNDYSPRRIERYLFLAKVSGAQVTIVLNKKDLCMDPENKFMEIKMIAGETPIEMISALDLKQTRTILQWIDPGKTIAFLGSSGAGKSTIINSLLGGEIQKTNEVKVSDGTGKHTTTRRELFLLPSGGVLMDNPGIREVGLFSEGSEDELEEVFPEIAVAAEECRFNDCSHNEEPNCGVVAAVKDGRISEARYFSYLKLSKELMAYQALNDPEEARKKKQKDKQMSKALQKRLKDKGRK.

One can recognise a CP-type G domain in the interval 101-259 (KRKGSQAIAS…LMDNPGIREV (159 aa)). GTP is bound by residues 149–152 (NKKD) and 201–209 (GSSGAGKST). The Zn(2+) site is built by cysteine 284, cysteine 289, histidine 291, and cysteine 297. The tract at residues 331–359 (DPEEARKKKQKDKQMSKALQKRLKDKGRK) is disordered. Basic residues predominate over residues 349 to 359 (LQKRLKDKGRK).

It belongs to the TRAFAC class YlqF/YawG GTPase family. RsgA subfamily. As to quaternary structure, monomer. Associates with 30S ribosomal subunit, binds 16S rRNA. It depends on Zn(2+) as a cofactor.

It is found in the cytoplasm. In terms of biological role, one of several proteins that assist in the late maturation steps of the functional core of the 30S ribosomal subunit. Helps release RbfA from mature subunits. May play a role in the assembly of ribosomal proteins into the subunit. Circularly permuted GTPase that catalyzes slow GTP hydrolysis, GTPase activity is stimulated by the 30S ribosomal subunit. The sequence is that of Small ribosomal subunit biogenesis GTPase RsgA from Leptospira interrogans serogroup Icterohaemorrhagiae serovar copenhageni (strain Fiocruz L1-130).